We begin with the raw amino-acid sequence, 680 residues long: Probable potassium transport system protein Kup (680 aa).

12 helical membrane-spanning segments follow: residues 16–36 (IAGMLITMGVVYGDIGTSPLY), 60–80 (ISLVFWTLMLMTTVKYVLIAL), 103–123 (WLVIPAIIGGATLLADGMLTP), 150–170 (EVIILTVTILSVLFFIQKFGT), 177–197 (FGPIMLIWFTFIGAIGVMNLM), 222–242 (VGILILGSVFLATTGAEALYS), 255–275 (SWPYIAACLVLNYFGQGVWLL), 302–322 (IPAILLATVAAIIASQALISG), 351–371 (LYISIVNWILWAVCLAVVFYF), 380–400 (AYGLAITITMLMTTILLFHYL), 407–427 (WFLAYVVLLFFGAIETIFFIA), and 432–452 (FMHGGYVTVLIAFVILFIMFV).

This sequence belongs to the HAK/KUP transporter (TC 2.A.72) family.

It localises to the cell membrane. It catalyses the reaction K(+)(in) + H(+)(in) = K(+)(out) + H(+)(out). Its function is as follows. Transport of potassium into the cell. Likely operates as a K(+):H(+) symporter. The protein is Probable potassium transport system protein Kup of Latilactobacillus sakei subsp. sakei (strain 23K) (Lactobacillus sakei subsp. sakei).